The following is a 145-amino-acid chain: Trafficking protein particle complex subunit 1 (145 aa).

It belongs to the TRAPP small subunits family. BET5 subfamily. Part of the multisubunit transport protein particle (TRAPP) complex. The heterodimer TRAPPC6B-TRAPPC3 interacts with TRAPPC1 likely providing a core for TRAPP complex formation.

The protein localises to the golgi apparatus. The protein resides in the cis-Golgi network. Its subcellular location is the endoplasmic reticulum. May play a role in vesicular transport from endoplasmic reticulum to Golgi. The chain is Trafficking protein particle complex subunit 1 from Mus musculus (Mouse).